Reading from the N-terminus, the 125-residue chain is S-adenosylmethionine decarboxylase proenzyme (125 aa).

The active-site Schiff-base intermediate with substrate; via pyruvic acid is serine 71. Residue serine 71 is modified to Pyruvic acid (Ser); by autocatalysis. Histidine 76 (proton acceptor; for processing activity) is an active-site residue. The Proton donor; for catalytic activity role is filled by cysteine 91.

Belongs to the prokaryotic AdoMetDC family. Type 1 subfamily. Heterotetramer of two alpha and two beta chains arranged as a dimer of alpha/beta heterodimers. Requires pyruvate as cofactor. Is synthesized initially as an inactive proenzyme. Formation of the active enzyme involves a self-maturation process in which the active site pyruvoyl group is generated from an internal serine residue via an autocatalytic post-translational modification. Two non-identical subunits are generated from the proenzyme in this reaction, and the pyruvate is formed at the N-terminus of the alpha chain, which is derived from the carboxyl end of the proenzyme. The post-translation cleavage follows an unusual pathway, termed non-hydrolytic serinolysis, in which the side chain hydroxyl group of the serine supplies its oxygen atom to form the C-terminus of the beta chain, while the remainder of the serine residue undergoes an oxidative deamination to produce ammonia and the pyruvoyl group blocking the N-terminus of the alpha chain.

The enzyme catalyses S-adenosyl-L-methionine + H(+) = S-adenosyl 3-(methylsulfanyl)propylamine + CO2. Its pathway is amine and polyamine biosynthesis; S-adenosylmethioninamine biosynthesis; S-adenosylmethioninamine from S-adenosyl-L-methionine: step 1/1. Its function is as follows. Catalyzes the decarboxylation of S-adenosylmethionine to S-adenosylmethioninamine (dcAdoMet), the propylamine donor required for the synthesis of the polyamines spermine and spermidine from the diamine putrescine. This Pyrobaculum arsenaticum (strain DSM 13514 / JCM 11321 / PZ6) protein is S-adenosylmethionine decarboxylase proenzyme.